Reading from the N-terminus, the 977-residue chain is Probable RNA-dependent RNA polymerase 5 (977 aa).

Residues 103-122 (EEMSVDSDAPSPKSLKSEDK) are disordered.

This sequence belongs to the RdRP family.

The catalysed reaction is RNA(n) + a ribonucleoside 5'-triphosphate = RNA(n+1) + diphosphate. In terms of biological role, probably involved in the RNA silencing pathway and required for the generation of small interfering RNAs (siRNAs). This chain is Probable RNA-dependent RNA polymerase 5 (RDR5), found in Arabidopsis thaliana (Mouse-ear cress).